Consider the following 328-residue polypeptide: DNA repair protein RAD51 homolog 4 (328 aa).

A preferentially binds ssDNA region spans residues 1–83 (MGVLRVGLCP…ELKTSTAILS (83 aa)). An ATP-binding site is contributed by 107-114 (GGPGSGKT).

Belongs to the RecA family. RAD51 subfamily. In terms of assembly, part of the BCDX2 complex consisting of RAD51B, RAD51C, RAD51D and XRCC2; the complex has a ring-like structure arranged into a flat disc around a central channel. In the absence of DNA, the BCDX2 subcomplex XRCC2:RAD51D formed a multimeric ring structure; in the presence of single-stranded DNA it formed a filamentous structure with the ssDNA. Interacts with SWSAP1 and ZSWIM7; involved in homologous recombination repair. Interacts with BLM; required for stimulation of BLM activity by the BCDX2 subcomplex XRCC2:RAD51D. In terms of tissue distribution, expressed in colon, prostate, spleen, testis, ovary, thymus and small intestine. Weakly expressed in leukocytes.

The protein resides in the nucleus. Its subcellular location is the cytoplasm. It is found in the cytoskeleton. It localises to the microtubule organizing center. The protein localises to the centrosome. The protein resides in the chromosome. Its subcellular location is the telomere. Its function is as follows. Involved in the homologous recombination repair (HRR) pathway of double-stranded DNA breaks arising during DNA replication or induced by DNA-damaging agents. Bind to single-stranded DNA (ssDNA) and has DNA-dependent ATPase activity. Part of the RAD51 paralog protein complex BCDX2 which acts in the BRCA1-BRCA2-dependent HR pathway. Upon DNA damage, BCDX2 acts downstream of BRCA2 recruitment and upstream of RAD51 recruitment. BCDX2 binds predominantly to the intersection of the four duplex arms of the Holliday junction and to junction of replication forks. The BCDX2 complex was originally reported to bind single-stranded DNA, single-stranded gaps in duplex DNA and specifically to nicks in duplex DNA. Involved in telomere maintenance. The BCDX2 subcomplex XRCC2:RAD51D can stimulate Holliday junction resolution by BLM. The polypeptide is DNA repair protein RAD51 homolog 4 (RAD51D) (Homo sapiens (Human)).